A 197-amino-acid polypeptide reads, in one-letter code: Phospholipid hydroperoxide glutathione peroxidase GPX4 (197 aa).

Ser-40 bears the Phosphoserine mark. Sec-73 is a catalytic residue. Sec-73 is a non-standard amino acid (selenocysteine).

It belongs to the glutathione peroxidase family. In terms of assembly, monomer. Has a tendency to form higher mass oligomers. Interacts with FUNDC1; this interaction promotes GPX4 recruitment into mitochondria through TOM/TIM complex where it is degraded by mitophagy. Widely expressed with the highest levels in testis, heart, cerebrum, ileum, stomach, liver, jejunum and epididymis. Expressed primarily in testis and sperm midpiece (at protein level). Expressed in brain (at protein level). Expressed in heart, liver and kidney (at protein level). Expressed in retina, especially in inner segments of photoreceptor cells (at protein level). As to expression, highly expressed during embryogenesis. Down-regulated between 14.5 dpc and 17.5 dpc. In terms of tissue distribution, highly expressed during embryogenesis. In contrast to isoform Mitochondrial and isoform Nuclear, which are down-regulated between 14.5 dpc and 17.5 dpc, remains constant. Mainly expressed in sperm. Weakly expressed during embryogenesis. Down-regulated between 14.5 dpc and 17.5 dpc.

It is found in the mitochondrion. Its subcellular location is the cytoplasm. The protein resides in the nucleus. The enzyme catalyses a hydroperoxy polyunsaturated fatty acid + 2 glutathione = a hydroxy polyunsaturated fatty acid + glutathione disulfide + H2O. The catalysed reaction is 2 glutathione + H2O2 = glutathione disulfide + 2 H2O. It carries out the reaction tert-butyl hydroperoxide + 2 glutathione = tert-butanol + glutathione disulfide + H2O. It catalyses the reaction cumene hydroperoxide + 2 glutathione = 2-phenylpropan-2-ol + glutathione disulfide + H2O. The enzyme catalyses (9S)-hydroperoxy-(10E,12Z)-octadecadienoate + 2 glutathione = (9S)-hydroxy-(10E,12Z)-octadecadienoate + glutathione disulfide + H2O. The catalysed reaction is (13S)-hydroperoxy-(9Z,11E)-octadecadienoate + 2 glutathione = (13S)-hydroxy-(9Z,11E)-octadecadienoate + glutathione disulfide + H2O. It carries out the reaction (5S)-hydroperoxy-(6E,8Z,11Z,14Z)-eicosatetraenoate + 2 glutathione = (5S)-hydroxy-(6E,8Z,11Z,14Z)-eicosatetraenoate + glutathione disulfide + H2O. It catalyses the reaction (12R)-hydroperoxy-(5Z,8Z,10E,14Z)-eicosatetraenoate + 2 glutathione = (12R)-hydroxy-(5Z,8Z,10E,14Z)-eicosatetraenoate + glutathione disulfide + H2O. The enzyme catalyses (12S)-hydroperoxy-(5Z,8Z,10E,14Z)-eicosatetraenoate + 2 glutathione = (12S)-hydroxy-(5Z,8Z,10E,14Z)-eicosatetraenoate + glutathione disulfide + H2O. The catalysed reaction is (15S)-hydroperoxy-(5Z,8Z,11Z,13E)-eicosatetraenoate + 2 glutathione = (15S)-hydroxy-(5Z,8Z,11Z,13E)-eicosatetraenoate + glutathione disulfide + H2O. It carries out the reaction (5S)-hydroperoxy-(6E,8Z,11Z,14Z,17Z)-eicosapentaenoate + 2 glutathione = (5S)-hydroxy-(6E,8Z,11Z,14Z,17Z)-eicosapentaenoate + glutathione disulfide + H2O. It catalyses the reaction (12S)-hydroperoxy-(5Z,8Z,10E,14Z,17Z)-eicosapentaenoate + 2 glutathione = (12S)-hydroxy-(5Z,8Z,10E,14Z,17Z)-eicosapentaenoate + glutathione disulfide + H2O. The enzyme catalyses (15S)-hydroperoxy-(5Z,8Z,11Z,13E,17Z)-eicosapentaenoate + 2 glutathione = (15S)-hydroxy-(5Z,8Z,11Z,13E,17Z)-eicosapentaenoate + glutathione disulfide + H2O. The catalysed reaction is (15S)-hydroperoxy-(11Z,13E)-eicosadienoate + 2 glutathione = (15S)-hydroxy-(11Z,13E)-eicosadienoate + glutathione disulfide + H2O. It carries out the reaction (17S)-hydroperoxy-(4Z,7Z,10Z,13Z,15E,19Z)-docosahexaenoate + 2 glutathione = (17S)-hydroxy-(4Z,7Z,10Z,13Z,15E,19Z)-docosahexaenoate + glutathione disulfide + H2O. It catalyses the reaction a hydroperoxy-1,2-diacyl-glycero-3-phosphocholine + 2 glutathione = a hydroxy-1,2-diacyl-glycero-3-phosphocholine + glutathione disulfide + H2O. Its function is as follows. Essential antioxidant peroxidase that directly reduces phospholipid hydroperoxide even if they are incorporated in membranes and lipoproteins. Can also reduce fatty acid hydroperoxide, cholesterol hydroperoxide and thymine hydroperoxide. Plays a key role in protecting cells from oxidative damage by preventing membrane lipid peroxidation. Required to prevent cells from ferroptosis, a non-apoptotic cell death resulting from an iron-dependent accumulation of lipid reactive oxygen species. The presence of selenocysteine (Sec) versus Cys at the active site is essential for life: it provides resistance to overoxidation and prevents cells against ferroptosis. The presence of Sec at the active site is also essential for the survival of a specific type of parvalbumin-positive interneurons, thereby preventing against fatal epileptic seizures. May be required to protect cells from the toxicity of ingested lipid hydroperoxides. Required for normal sperm development and male fertility. Essential for maturation and survival of photoreceptor cells. Plays a role in a primary T-cell response to viral and parasitic infection by protecting T-cells from ferroptosis and by supporting T-cell expansion. Plays a role of glutathione peroxidase in platelets in the arachidonic acid metabolism. Reduces hydroperoxy ester lipids formed by a 15-lipoxygenase that may play a role as down-regulator of the cellular 15-lipoxygenase pathway. Can also reduce small soluble hydroperoxides such as H2O2 and tert-butyl hydroperoxide. In terms of biological role, specifically able to suppress the production of leukotriene and prostaglandin in response to several stimuli by reducing fatty acid hydroperoxide. Specifically required to prevent mitochondrial cell death by mediating reduction of cardiolipin hydroperoxide. Also required for normal sperm development and male fertility. Functionally, required for male fertility by stabilizing the condensed chromatin in sperm nuclei. The sequence is that of Phospholipid hydroperoxide glutathione peroxidase GPX4 from Mus musculus (Mouse).